The following is an 88-amino-acid chain: Small ribosomal subunit protein uS15c (88 aa).

Belongs to the universal ribosomal protein uS15 family. As to quaternary structure, part of the 30S ribosomal subunit.

Its subcellular location is the plastid. It is found in the chloroplast. The sequence is that of Small ribosomal subunit protein uS15c (rps15) from Nasturtium officinale (Watercress).